The sequence spans 598 residues: Integrator complex subunit 11 (598 aa).

Positions 68, 70, 72, 73, 157, and 178 each coordinate Zn(2+). The HXHXDH motif motif lies at His68–His73. Glu203 is a catalytic residue. His414 contacts Zn(2+). A Nuclear localization signal motif is present at residues Pro470 to Met480.

It belongs to the metallo-beta-lactamase superfamily. RNA-metabolizing metallo-beta-lactamase-like family. INTS11 subfamily. Component of the Integrator complex, composed of core subunits INTS1, INTS2, INTS3, INTS4, INTS5, INTS6, INTS7, INTS8, INTS9/RC74, INTS10, INTS11/CPSF3L, INTS12, INTS13, INTS14 and INTS15. The core complex associates with protein phosphatase 2A subunits PPP2CA and PPP2R1A, to form the Integrator-PP2A (INTAC) complex. INTS11 is part of the RNA endonuclease subcomplex, composed of INTS4, INTS9, INTS11 and inositol hexakisphosphate (InsP6). Zn(2+) serves as cofactor.

The protein localises to the nucleus. The protein resides in the cytoplasm. RNA endonuclease component of the integrator complex, a multiprotein complex that terminates RNA polymerase II (Pol II) transcription in the promoter-proximal region of genes. The integrator complex provides a quality checkpoint during transcription elongation by driving premature transcription termination of transcripts that are unfavorably configured for transcriptional elongation: the complex terminates transcription by (1) catalyzing dephosphorylation of the C-terminal domain (CTD) of Pol II subunit POLR2A/RPB1 and SUPT5H/SPT5, (2) degrading the exiting nascent RNA transcript via endonuclease activity and (3) promoting the release of Pol II from bound DNA. The integrator complex is also involved in terminating the synthesis of non-coding Pol II transcripts, such as enhancer RNAs (eRNAs), small nuclear RNAs (snRNAs), telomerase RNAs and long non-coding RNAs (lncRNAs). Within the integrator complex, INTS11 constitutes the RNA endonuclease subunit that degrades exiting nascent RNA transcripts. The chain is Integrator complex subunit 11 (cpsf3l) from Danio rerio (Zebrafish).